Reading from the N-terminus, the 327-residue chain is Probable cell division protein WhiA (327 aa).

Positions 275–308 form a DNA-binding region, H-T-H motif; it reads SLEELGRLADPQMTKDAVAGRIRRLLTMADKRAE.

This sequence belongs to the WhiA family.

Involved in cell division and chromosome segregation. In Corynebacterium glutamicum (strain ATCC 13032 / DSM 20300 / JCM 1318 / BCRC 11384 / CCUG 27702 / LMG 3730 / NBRC 12168 / NCIMB 10025 / NRRL B-2784 / 534), this protein is Probable cell division protein WhiA.